Here is a 240-residue protein sequence, read N- to C-terminus: Chloroplastic group IIB intron splicing facilitator CRS2-B, chloroplastic (240 aa).

Belongs to the PTH family. CRS2 subfamily. As to quaternary structure, part of large ribonucleo-protein complexes that include group IIB introns and either CAF1 or CAF2.

It localises to the plastid. It is found in the chloroplast stroma. Its function is as follows. Required for the splicing of group IIB introns in chloroplasts. This is Chloroplastic group IIB intron splicing facilitator CRS2-B, chloroplastic (CRS2B) from Arabidopsis thaliana (Mouse-ear cress).